The following is a 282-amino-acid chain: Probable endonuclease 4 (282 aa).

Zn(2+) is bound by residues His69, His109, Glu144, Asp178, His181, His215, Asp228, His230, and Glu260.

Belongs to the AP endonuclease 2 family. Requires Zn(2+) as cofactor.

The enzyme catalyses Endonucleolytic cleavage to 5'-phosphooligonucleotide end-products.. Its function is as follows. Endonuclease IV plays a role in DNA repair. It cleaves phosphodiester bonds at apurinic or apyrimidinic (AP) sites, generating a 3'-hydroxyl group and a 5'-terminal sugar phosphate. This Thermosipho africanus (strain TCF52B) protein is Probable endonuclease 4.